The sequence spans 483 residues: Regulatory protein ViaA (483 aa).

It belongs to the ViaA family. Homodimer. Interacts with RavA.

It is found in the cytoplasm. Component of the RavA-ViaA chaperone complex, which may act on the membrane to optimize the function of some of the respiratory chains. ViaA stimulates the ATPase activity of RavA. In Escherichia coli O127:H6 (strain E2348/69 / EPEC), this protein is Regulatory protein ViaA.